The primary structure comprises 621 residues: Chaperone protein HscA homolog (621 aa).

The protein belongs to the heat shock protein 70 family.

Functionally, chaperone involved in the maturation of iron-sulfur cluster-containing proteins. Has a low intrinsic ATPase activity which is markedly stimulated by HscB. The chain is Chaperone protein HscA homolog from Ralstonia pickettii (strain 12J).